An 885-amino-acid chain; its full sequence is DNA mismatch repair protein MutS (885 aa).

640-647 (GPNMGGKS) provides a ligand contact to ATP.

It belongs to the DNA mismatch repair MutS family.

In terms of biological role, this protein is involved in the repair of mismatches in DNA. It is possible that it carries out the mismatch recognition step. This protein has a weak ATPase activity. This Variovorax paradoxus (strain S110) protein is DNA mismatch repair protein MutS.